Reading from the N-terminus, the 123-residue chain is Anti-lipopolysaccharide factor (123 aa).

An N-terminal signal peptide occupies residues Met1–Ala26. Cys55 and Cys76 are disulfide-bonded.

In terms of tissue distribution, strong expression in hemocytes, heart and muscle, with weaker expression detected in gills and hepatopancreas. No expression detected in eyes.

Its subcellular location is the secreted. Its function is as follows. Binds to bacterial LPS and may specifically inhibit the LPS-mediated activation of the hemolymph coagulation. It has a strong antibacterial effect especially on the growth of Gram-negative bacteria. The chain is Anti-lipopolysaccharide factor from Scylla serrata (Mud crab).